A 663-amino-acid chain; its full sequence is UvrABC system protein B (663 aa).

In terms of domain architecture, Helicase ATP-binding spans 31-271 (DNIEGGEKAQ…EQSISKIQAE (241 aa)). 44-51 (GATGTGKT) contacts ATP. Positions 97 to 120 (YYDYYQPEAYVPSSDTYIEKDSSV) match the Beta-hairpin motif. Residues 435–601 (QMDDLLGEIN…TIKKDIRDLI (167 aa)) form the Helicase C-terminal domain. In terms of domain architecture, UVR spans 627 to 662 (QEAIKQLQKNMQEAAELLDFELAAQLRDLILELKAM).

It belongs to the UvrB family. Forms a heterotetramer with UvrA during the search for lesions. Interacts with UvrC in an incision complex.

It localises to the cytoplasm. Its function is as follows. The UvrABC repair system catalyzes the recognition and processing of DNA lesions. A damage recognition complex composed of 2 UvrA and 2 UvrB subunits scans DNA for abnormalities. Upon binding of the UvrA(2)B(2) complex to a putative damaged site, the DNA wraps around one UvrB monomer. DNA wrap is dependent on ATP binding by UvrB and probably causes local melting of the DNA helix, facilitating insertion of UvrB beta-hairpin between the DNA strands. Then UvrB probes one DNA strand for the presence of a lesion. If a lesion is found the UvrA subunits dissociate and the UvrB-DNA preincision complex is formed. This complex is subsequently bound by UvrC and the second UvrB is released. If no lesion is found, the DNA wraps around the other UvrB subunit that will check the other stand for damage. This is UvrABC system protein B from Streptococcus equi subsp. zooepidemicus (strain H70).